The sequence spans 485 residues: Ribulose bisphosphate carboxylase large chain (485 aa).

Substrate is bound by residues Asn124 and Thr174. Catalysis depends on Lys176, which acts as the Proton acceptor. Lys178 provides a ligand contact to substrate. Mg(2+) is bound by residues Lys202, Asp204, and Glu205. Residue Lys202 is modified to N6-carboxylysine. His294 acts as the Proton acceptor in catalysis. The substrate site is built by Arg295, His327, and Ser379.

It belongs to the RuBisCO large chain family. Type I subfamily. As to quaternary structure, heterohexadecamer of 8 large chains and 8 small chains. Requires Mg(2+) as cofactor.

It carries out the reaction 2 (2R)-3-phosphoglycerate + 2 H(+) = D-ribulose 1,5-bisphosphate + CO2 + H2O. The enzyme catalyses D-ribulose 1,5-bisphosphate + O2 = 2-phosphoglycolate + (2R)-3-phosphoglycerate + 2 H(+). Functionally, ruBisCO catalyzes two reactions: the carboxylation of D-ribulose 1,5-bisphosphate, the primary event in carbon dioxide fixation, as well as the oxidative fragmentation of the pentose substrate. Both reactions occur simultaneously and in competition at the same active site. This is Ribulose bisphosphate carboxylase large chain from Rhodopseudomonas palustris (strain HaA2).